Reading from the N-terminus, the 432-residue chain is Transcriptional adapter 3-B (432 aa).

Disordered stretches follow at residues 90–124 (HELGTPIKHSKPKKQKLDGKGSHASGPGPGRPKSR) and 275–315 (SPVE…KSLE). Residues 293 to 305 (DGASTSPRSQNKP) are compositionally biased toward polar residues. Residues 335-398 (ADDSEDEVLA…NEVMDAFRKI (64 aa)) are a coiled coil.

It belongs to the NGG1 family.

Its subcellular location is the nucleus. In terms of biological role, functions as a component of the PCAF complex. The PCAF complex is capable of efficiently acetylating histones in a nucleosomal context. The sequence is that of Transcriptional adapter 3-B (tada3-b) from Xenopus laevis (African clawed frog).